The sequence spans 190 residues: Interferon alpha-9 (190 aa).

A signal peptide spans 1–23 (MARPFAFLMVLVVISYWSTCSLG). Disulfide bonds link Cys-24–Cys-122 and Cys-52–Cys-162. N-linked (GlcNAc...) asparagine glycosylation occurs at Asn-101.

This sequence belongs to the alpha/beta interferon family.

Its subcellular location is the secreted. Its function is as follows. Produced by macrophages, IFN-alpha have antiviral activities. Interferon stimulates the production of two enzymes: a protein kinase and an oligoadenylate synthetase. This is Interferon alpha-9 (Ifna9) from Mus musculus (Mouse).